The sequence spans 216 residues: Thiopurine S-methyltransferase (216 aa).

Residues Trp10, Leu45, Glu66, and Arg123 each coordinate S-adenosyl-L-methionine.

This sequence belongs to the class I-like SAM-binding methyltransferase superfamily. TPMT family.

Its subcellular location is the cytoplasm. It catalyses the reaction S-adenosyl-L-methionine + a thiopurine = S-adenosyl-L-homocysteine + a thiopurine S-methylether.. In Pseudomonas entomophila (strain L48), this protein is Thiopurine S-methyltransferase.